The primary structure comprises 527 residues: Cytochrome P450 monooxygenase olcJ (527 aa).

The chain crosses the membrane as a helical span at residues 21–43 (GLLTRYNVFMAISITVTALYLIH). C464 lines the heme pocket.

The protein belongs to the cytochrome P450 family. The cofactor is heme.

It localises to the membrane. Its pathway is secondary metabolite biosynthesis; terpenoid biosynthesis. Its function is as follows. Cytochrome P450 monooxygenase; part of the gene cluster that mediates the biosynthesis of 15-deoxyoxalicine B. The first step of the pathway is the synthesis of nicotinyl-CoA from nicotinic acid by the nicotinic acid-CoA ligase olcI. Nicotinyl-CoA is then a substrate of polyketide synthase olcA to produce 4-hydroxy-6-(3-pyridinyl)-2H-pyran-2-one (HPPO) which is further prenylated by the polyprenyl transferase olcH to yield geranylgeranyl-HPPO. Geranylgeranyl pyrophosphate is provided by the cluster-specific geranylgeranyl pyrophosphate synthase olcC. The FAD-dependent monooxygenase olcE catalyzes the epoxidation of geranylgeranyl-HPPO and the terpene cyclase olcD catalyzes the cyclization of the terpenoid component, resulting in the formation of the tricyclic terpene moiety seen in predecaturin E. The cytochrome P450 monooxygenase then catalyzes the allylic oxidation of predecaturin E, which is followed by spirocylization with concomitant loss of one molecule of water to form decaturin E. Decaturin E is the substrate of the cytochrome P450 monooxygenase olcJ which hydroxylates it at the C-29 position to form decaturin F. The short-chain dehydrogenase/reductase olcF may catalyze the oxidation of decaturin F to generate the 29-hydroxyl-27-one intermediate, and subsequent hemiacetal formation probably leads to the formation of decaturin C. The dioxygenase olcK may be a peroxisomal enzyme that catalyzes the hydroxylation of decaturin C into decaturin A once decaturin C is shuttled into the peroxisome by the MFS transporter olcL. Finally the cytochrome P450 monooxygenase olcB catalyzes the oxidative rearrangement to yield 15-deoxyoxalicine B. In the absence of olcJ, decaturin E may be shunted to a pathway in which it is oxidized to a ketone, possibly by olcF, to form decaturin D, which undergoes further allylic oxidation to yield decaturin G. Moreover, in the absence of oclK or oclL, oclB can convert decaturin C into 15-deoxyoxalicine A. This is Cytochrome P450 monooxygenase olcJ from Penicillium canescens.